Reading from the N-terminus, the 328-residue chain is Protoheme IX farnesyltransferase (328 aa).

Transmembrane regions (helical) follow at residues 31–51 (IILL…KGEV), 53–73 (LFLL…ANAI), 120–140 (VFAN…YVGV), 153–173 (IVIG…AVTG), 181–201 (LLFA…AIYI), 226–246 (IWVY…PLHV), 250–270 (IYAV…WQLL), and 285–305 (YSIY…LPFT).

The protein belongs to the UbiA prenyltransferase family. Protoheme IX farnesyltransferase subfamily.

The protein resides in the cell inner membrane. The catalysed reaction is heme b + (2E,6E)-farnesyl diphosphate + H2O = Fe(II)-heme o + diphosphate. The protein operates within porphyrin-containing compound metabolism; heme O biosynthesis; heme O from protoheme: step 1/1. Its function is as follows. Converts heme B (protoheme IX) to heme O by substitution of the vinyl group on carbon 2 of heme B porphyrin ring with a hydroxyethyl farnesyl side group. This is Protoheme IX farnesyltransferase from Trichodesmium erythraeum (strain IMS101).